Reading from the N-terminus, the 1146-residue chain is Probable transport protein MmpL12 (1146 aa).

A run of 11 helical transmembrane segments spans residues 25–45 (LIVI…LPTL), 206–226 (VSVL…LVPL), 254–274 (AIVF…VFLI), 298–318 (IGKV…AMVF), 330–350 (AIAV…PAIL), 382–402 (TIHL…TLLI), 826–846 (FIVI…LRAL), 850–870 (IYLI…GTLV), 883–903 (LPGL…MLLI), 928–948 (VITS…GASI), and 949–969 (NTMA…TFLV).

It belongs to the resistance-nodulation-cell division (RND) (TC 2.A.6) family. MmpL subfamily.

Its subcellular location is the cell membrane. The protein is Probable transport protein MmpL12 (mmpL12) of Mycobacterium tuberculosis (strain CDC 1551 / Oshkosh).